A 218-amino-acid polypeptide reads, in one-letter code: UPF0711 protein C18orf21 homolog (218 aa).

Ser126 bears the Phosphoserine mark. Positions 130–146 (ASAASKASPKTPKRAAA) are enriched in low complexity. Positions 130 to 192 (ASAASKASPK…NGSKRKKHFS (63 aa)) are disordered. Phosphothreonine is present on Thr140. Over residues 147-156 (GSTNISQSVH) the composition is skewed to polar residues. Over residues 161–172 (RSPSSTVRTPTS) the composition is skewed to low complexity. Over residues 173 to 183 (GQSTPICSSRN) the composition is skewed to polar residues.

The protein belongs to the UPF0711 family.

In Rattus norvegicus (Rat), this protein is UPF0711 protein C18orf21 homolog.